Consider the following 148-residue polypeptide: 3-dehydroquinate dehydratase (148 aa).

The active-site Proton acceptor is Tyr23. Residues Asn74, His80, and Asp87 each contribute to the substrate site. His100 functions as the Proton donor in the catalytic mechanism. Substrate-binding positions include 101–102 and Arg111; that span reads IS.

The protein belongs to the type-II 3-dehydroquinase family. Homododecamer.

The enzyme catalyses 3-dehydroquinate = 3-dehydroshikimate + H2O. It functions in the pathway metabolic intermediate biosynthesis; chorismate biosynthesis; chorismate from D-erythrose 4-phosphate and phosphoenolpyruvate: step 3/7. Its function is as follows. Catalyzes a trans-dehydration via an enolate intermediate. The sequence is that of 3-dehydroquinate dehydratase from Thermoanaerobacter pseudethanolicus (strain ATCC 33223 / 39E) (Clostridium thermohydrosulfuricum).